The chain runs to 262 residues: L-aspartate dehydrogenase (262 aa).

NAD(+)-binding residues include A128 and N183. H213 is an active-site residue.

It belongs to the L-aspartate dehydrogenase family.

It carries out the reaction L-aspartate + NADP(+) + H2O = oxaloacetate + NH4(+) + NADPH + H(+). The enzyme catalyses L-aspartate + NAD(+) + H2O = oxaloacetate + NH4(+) + NADH + H(+). The protein operates within cofactor biosynthesis; NAD(+) biosynthesis; iminoaspartate from L-aspartate (dehydrogenase route): step 1/1. Its function is as follows. Specifically catalyzes the NAD or NADP-dependent dehydrogenation of L-aspartate to iminoaspartate. The sequence is that of L-aspartate dehydrogenase from Methanopyrus kandleri (strain AV19 / DSM 6324 / JCM 9639 / NBRC 100938).